The chain runs to 292 residues: NAD kinase (292 aa).

The active-site Proton acceptor is Asp73. NAD(+) is bound by residues 73-74 (DG), 147-148 (NE), His158, Arg175, Asp177, 188-193 (TAYSLS), and Gln247.

It belongs to the NAD kinase family. The cofactor is a divalent metal cation.

Its subcellular location is the cytoplasm. The enzyme catalyses NAD(+) + ATP = ADP + NADP(+) + H(+). In terms of biological role, involved in the regulation of the intracellular balance of NAD and NADP, and is a key enzyme in the biosynthesis of NADP. Catalyzes specifically the phosphorylation on 2'-hydroxyl of the adenosine moiety of NAD to yield NADP. The polypeptide is NAD kinase (Edwardsiella ictaluri (strain 93-146)).